The following is a 208-amino-acid chain: Imidazoleglycerol-phosphate dehydratase (208 aa).

It belongs to the imidazoleglycerol-phosphate dehydratase family.

The protein localises to the cytoplasm. It catalyses the reaction D-erythro-1-(imidazol-4-yl)glycerol 3-phosphate = 3-(imidazol-4-yl)-2-oxopropyl phosphate + H2O. It functions in the pathway amino-acid biosynthesis; L-histidine biosynthesis; L-histidine from 5-phospho-alpha-D-ribose 1-diphosphate: step 6/9. The protein is Imidazoleglycerol-phosphate dehydratase of Paenarthrobacter aurescens (strain TC1).